The chain runs to 268 residues: Purine nucleoside phosphorylase (268 aa).

Phosphate contacts are provided by residues S36, H68, 88–90 (RIH), and A120. A purine D-ribonucleoside is bound at residue E189. S208 contributes to the phosphate binding site. Position 231 (N231) interacts with a purine D-ribonucleoside.

This sequence belongs to the PNP/MTAP phosphorylase family. In terms of assembly, homotrimer.

The catalysed reaction is a purine 2'-deoxy-D-ribonucleoside + phosphate = a purine nucleobase + 2-deoxy-alpha-D-ribose 1-phosphate. The protein operates within purine metabolism; purine nucleoside salvage. The purine nucleoside phosphorylases catalyze the phosphorolytic breakdown of the N-glycosidic bond in the beta-(deoxy)ribonucleoside molecules, with the formation of the corresponding free purine bases and pentose-1-phosphate. Cleaves guanosine, inosine, 2'-deoxyguanosine and 2'-deoxyinosine. The chain is Purine nucleoside phosphorylase (punA) from Mycobacterium leprae (strain TN).